The chain runs to 290 residues: Elongation factor Ts (290 aa).

The interval threonine 80 to valine 83 is involved in Mg(2+) ion dislocation from EF-Tu.

It belongs to the EF-Ts family.

It is found in the cytoplasm. Its function is as follows. Associates with the EF-Tu.GDP complex and induces the exchange of GDP to GTP. It remains bound to the aminoacyl-tRNA.EF-Tu.GTP complex up to the GTP hydrolysis stage on the ribosome. The polypeptide is Elongation factor Ts (Neorickettsia sennetsu (strain ATCC VR-367 / Miyayama) (Ehrlichia sennetsu)).